The sequence spans 444 residues: Phosphoribosylamine--glycine ligase (444 aa).

One can recognise an ATP-grasp domain in the interval 109–324 (RNLFKKYEID…FLDVCFAIAE (216 aa)). 140 to 202 (MTSLGKDVVV…EEKLVGVEFT (63 aa)) is an ATP binding site. Residues Gln-282, Glu-294, and Asn-296 each coordinate Mg(2+). 3 residues coordinate Mn(2+): Gln-282, Glu-294, and Asn-296.

Belongs to the GARS family. The cofactor is Mg(2+). Requires Mn(2+) as cofactor.

The enzyme catalyses 5-phospho-beta-D-ribosylamine + glycine + ATP = N(1)-(5-phospho-beta-D-ribosyl)glycinamide + ADP + phosphate + H(+). It functions in the pathway purine metabolism; IMP biosynthesis via de novo pathway; N(1)-(5-phospho-D-ribosyl)glycinamide from 5-phospho-alpha-D-ribose 1-diphosphate: step 2/2. The protein is Phosphoribosylamine--glycine ligase of Methanococcus maripaludis (strain DSM 14266 / JCM 13030 / NBRC 101832 / S2 / LL).